The chain runs to 417 residues: NADH-quinone oxidoreductase subunit D (417 aa).

The protein belongs to the complex I 49 kDa subunit family. In terms of assembly, NDH-1 is composed of 14 different subunits. Subunits NuoB, C, D, E, F, and G constitute the peripheral sector of the complex.

It localises to the cell inner membrane. The catalysed reaction is a quinone + NADH + 5 H(+)(in) = a quinol + NAD(+) + 4 H(+)(out). Functionally, NDH-1 shuttles electrons from NADH, via FMN and iron-sulfur (Fe-S) centers, to quinones in the respiratory chain. The immediate electron acceptor for the enzyme in this species is believed to be ubiquinone. Couples the redox reaction to proton translocation (for every two electrons transferred, four hydrogen ions are translocated across the cytoplasmic membrane), and thus conserves the redox energy in a proton gradient. The chain is NADH-quinone oxidoreductase subunit D from Burkholderia vietnamiensis (strain G4 / LMG 22486) (Burkholderia cepacia (strain R1808)).